The chain runs to 847 residues: Protein IRS1 (847 aa).

Disordered stretches follow at residues Met-1–His-82, Trp-607–Pro-627, and Gln-715–His-847. Positions Arg-16–Gly-25 are enriched in gly residues. Low complexity predominate over residues Val-26 to Gly-56. Over residues Glu-723 to Tyr-733 the composition is skewed to acidic residues. The segment covering Arg-833–His-847 has biased composition (basic residues).

It belongs to the herpesviridae US22 family. In terms of assembly, interacts (via N-terminus) with the viral DNA polymerase accessory subunit UL44. Interacts (via C-terminus) with host EIF2AK2.

Its subcellular location is the virion. The protein resides in the host cytoplasm. It localises to the host nucleus. Its function is as follows. Acts as a transactivator along with IE2, and is required for oriLyt-dependent DNA replication in the transient transfection replication assay using native promoters. This is Protein IRS1 (IRS1) from Human cytomegalovirus (strain Merlin) (HHV-5).